The following is a 543-amino-acid chain: Ribosomal protein arginine N-methyltransferase rmt3 (543 aa).

The C2H2-type zinc-finger motif lies at 58 to 81 (FCCLFCDSTFTCLKDLWSHCKEAH). Positions 217 to 543 (DSYYFESYAG…KADSQSYVLN (327 aa)) constitute an SAM-dependent MTase PRMT-type domain. S-adenosyl-L-homocysteine contacts are provided by Arg-239, Gly-263, Asp-285, Ser-287, Ile-313, and Glu-314. Active-site residues include Glu-329 and Glu-338.

The protein belongs to the class I-like SAM-binding methyltransferase superfamily. Protein arginine N-methyltransferase family. In terms of assembly, interacts with ef1a-c, rps2 and rps24. Note=Associates with the 40S ribosomal particle.

Its subcellular location is the cytoplasm. It is found in the cytosol. The catalysed reaction is L-arginyl-[protein] + S-adenosyl-L-methionine = N(omega)-methyl-L-arginyl-[protein] + S-adenosyl-L-homocysteine + H(+). The enzyme catalyses L-arginyl-[protein] + 2 S-adenosyl-L-methionine = N(omega),N(omega)-dimethyl-L-arginyl-[protein] + 2 S-adenosyl-L-homocysteine + 2 H(+). Methylates (mono and asymmetric dimethylation) the guanidino nitrogens of arginyl residues in ribosomal protein rps2. The polypeptide is Ribosomal protein arginine N-methyltransferase rmt3 (rmt3) (Schizosaccharomyces pombe (strain 972 / ATCC 24843) (Fission yeast)).